The following is a 504-amino-acid chain: Probable cytosol aminopeptidase (504 aa).

2 residues coordinate Mn(2+): Lys274 and Asp279. The active site involves Lys286. 3 residues coordinate Mn(2+): Asp297, Asp356, and Glu358. The active site involves Arg360.

Belongs to the peptidase M17 family. The cofactor is Mn(2+).

The protein localises to the cytoplasm. It carries out the reaction Release of an N-terminal amino acid, Xaa-|-Yaa-, in which Xaa is preferably Leu, but may be other amino acids including Pro although not Arg or Lys, and Yaa may be Pro. Amino acid amides and methyl esters are also readily hydrolyzed, but rates on arylamides are exceedingly low.. The enzyme catalyses Release of an N-terminal amino acid, preferentially leucine, but not glutamic or aspartic acids.. Its function is as follows. Presumably involved in the processing and regular turnover of intracellular proteins. Catalyzes the removal of unsubstituted N-terminal amino acids from various peptides. This chain is Probable cytosol aminopeptidase, found in Gloeobacter violaceus (strain ATCC 29082 / PCC 7421).